We begin with the raw amino-acid sequence, 432 residues long: Ribosomal protein uS12 methylthiotransferase RimO (432 aa).

The region spanning 4–120 (HNVFLLSLGC…LLQAIGAQYR (117 aa)) is the MTTase N-terminal domain. Residues Cys-13, Cys-49, Cys-83, Cys-144, Cys-148, and Cys-151 each coordinate [4Fe-4S] cluster. Residues 130–359 (LTPPHISYLK…MELQETIAKE (230 aa)) form the Radical SAM core domain. The region spanning 362 to 429 (QLFEGKELTV…AYELHGTITA (68 aa)) is the TRAM domain.

This sequence belongs to the methylthiotransferase family. RimO subfamily. The cofactor is [4Fe-4S] cluster.

The protein resides in the cytoplasm. The enzyme catalyses L-aspartate(89)-[ribosomal protein uS12]-hydrogen + (sulfur carrier)-SH + AH2 + 2 S-adenosyl-L-methionine = 3-methylsulfanyl-L-aspartate(89)-[ribosomal protein uS12]-hydrogen + (sulfur carrier)-H + 5'-deoxyadenosine + L-methionine + A + S-adenosyl-L-homocysteine + 2 H(+). In terms of biological role, catalyzes the methylthiolation of an aspartic acid residue of ribosomal protein uS12. The polypeptide is Ribosomal protein uS12 methylthiotransferase RimO (Chlorobium phaeobacteroides (strain DSM 266 / SMG 266 / 2430)).